A 465-amino-acid polypeptide reads, in one-letter code: Na(+)-translocating NADH-quinone reductase subunit A (465 aa).

This sequence belongs to the NqrA family. Composed of six subunits; NqrA, NqrB, NqrC, NqrD, NqrE and NqrF.

The catalysed reaction is a ubiquinone + n Na(+)(in) + NADH + H(+) = a ubiquinol + n Na(+)(out) + NAD(+). Functionally, NQR complex catalyzes the reduction of ubiquinone-1 to ubiquinol by two successive reactions, coupled with the transport of Na(+) ions from the cytoplasm to the periplasm. NqrA to NqrE are probably involved in the second step, the conversion of ubisemiquinone to ubiquinol. The chain is Na(+)-translocating NADH-quinone reductase subunit A from Chlamydia trachomatis serovar A (strain ATCC VR-571B / DSM 19440 / HAR-13).